The following is a 599-amino-acid chain: Elongation factor 4 (599 aa).

The tr-type G domain maps to 4 to 186 (KFIRNFSIIA…AIIKHVPPPL (183 aa)). Residues 16–21 (DHGKST) and 133–136 (NKID) each bind GTP.

It belongs to the TRAFAC class translation factor GTPase superfamily. Classic translation factor GTPase family. LepA subfamily.

It localises to the cell membrane. The enzyme catalyses GTP + H2O = GDP + phosphate + H(+). In terms of biological role, required for accurate and efficient protein synthesis under certain stress conditions. May act as a fidelity factor of the translation reaction, by catalyzing a one-codon backward translocation of tRNAs on improperly translocated ribosomes. Back-translocation proceeds from a post-translocation (POST) complex to a pre-translocation (PRE) complex, thus giving elongation factor G a second chance to translocate the tRNAs correctly. Binds to ribosomes in a GTP-dependent manner. In Ureaplasma urealyticum serovar 10 (strain ATCC 33699 / Western), this protein is Elongation factor 4.